The sequence spans 634 residues: Zinc finger and BTB domain-containing protein 22 (634 aa).

The 65-residue stretch at 57 to 121 folds into the BTB domain; sequence CDVSIRVQGR…AYTGRLSMAA (65 aa). 2 disordered regions span residues 167-247 and 308-461; these read TVPG…APVV and APTP…GTSV. Over residues 180 to 198 the composition is skewed to low complexity; sequence TVAPATMGSARSHASSRAS. Over residues 199 to 209 the composition is skewed to polar residues; sequence ENQSPSSSNYF. At Ser-202 the chain carries Phosphoserine. Residues 217-229 are compositionally biased toward low complexity; it reads FSSSSQEAFAASA. Positions 317–340 are enriched in acidic residues; sequence PDLEEEEEEEDLVLTCEDDEDEEL. Residues 452-461 are compositionally biased toward low complexity; the sequence is GAVTVGGTSV. The C2H2-type 1; atypical zinc-finger motif lies at 486–507; sequence FLCHCGKAFSHKSMRDRHVNMH. 2 consecutive C2H2-type zinc fingers follow at residues 513–535 and 541–562; these read FDCP…MKTH and YECG…HRGH. The disordered stretch occupies residues 568–634; sequence RLGGVGAVPG…MGFGGGGGAN (67 aa). Residues 608–618 are compositionally biased toward low complexity; the sequence is PPSSRRVWSPP.

This sequence belongs to the krueppel C2H2-type zinc-finger protein family.

The protein resides in the nucleus. Its function is as follows. May be involved in transcriptional regulation. The polypeptide is Zinc finger and BTB domain-containing protein 22 (ZBTB22) (Homo sapiens (Human)).